A 276-amino-acid polypeptide reads, in one-letter code: MGHMVNAVKQIPTFLDLGANALEMDVTFKNEEPTYTYHGVPCDAFRDCIRWEYFNVFAKTLREYTTPGFDKYREQLILLVFDLKTGDMNNAQARTAGVNTAKQLLQYYWNNDNNGGRAYVVLSIPDIAQHELIKGFKETLKKEGHENLLDKVGYDFSGPYLPRLPTLDETHEAFKKAGVEGHVWLSDGLTNFSPLGDMARLKEAIKSRDSANGFINKIYYWSVDKVSTAEKALKVGVDGIVTNHPDVIIGVLNENGFKDKYRLATYDDDPWETFGK.

The active site involves His-3. Residues Glu-23 and Asp-25 each coordinate Mg(2+). His-38 serves as the catalytic Nucleophile. The cysteines at positions 42 and 48 are disulfide-linked. Asp-82 lines the Mg(2+) pocket.

This sequence belongs to the arthropod phospholipase D family. Class I subfamily. Requires Mg(2+) as cofactor. Expressed by the venom gland.

Its subcellular location is the secreted. The enzyme catalyses an N-(acyl)-sphingosylphosphocholine = an N-(acyl)-sphingosyl-1,3-cyclic phosphate + choline. It catalyses the reaction an N-(acyl)-sphingosylphosphoethanolamine = an N-(acyl)-sphingosyl-1,3-cyclic phosphate + ethanolamine. The catalysed reaction is a 1-acyl-sn-glycero-3-phosphocholine = a 1-acyl-sn-glycero-2,3-cyclic phosphate + choline. It carries out the reaction a 1-acyl-sn-glycero-3-phosphoethanolamine = a 1-acyl-sn-glycero-2,3-cyclic phosphate + ethanolamine. Its function is as follows. Dermonecrotic toxins cleave the phosphodiester linkage between the phosphate and headgroup of certain phospholipids (sphingolipid and lysolipid substrates), forming an alcohol (often choline) and a cyclic phosphate. This toxin acts on sphingomyelin (SM). It may also act on ceramide phosphoethanolamine (CPE), lysophosphatidylcholine (LPC) and lysophosphatidylethanolamine (LPE), but not on lysophosphatidylserine (LPS), and lysophosphatidylglycerol (LPG). It acts by transphosphatidylation, releasing exclusively cyclic phosphate products as second products. Induces dermonecrosis, hemolysis, increased vascular permeability, edema, inflammatory response, and platelet aggregation. The sequence is that of Dermonecrotic toxin Ls4SicTox-alphaIII1i from Loxosceles sp. (strain 4 GJB-2008) (Recluse spider).